A 453-amino-acid polypeptide reads, in one-letter code: Aspartic proteinase PCS1 (453 aa).

An N-terminal signal peptide occupies residues 1 to 18; the sequence is MFSRFHALFLLLVLSVRT. The propeptide at 19-57 is activation peptide; the sequence is YKCVSSSSSSSSSFSFSSFSSSSSSQTLVLPLKTRITPT. N-linked (GlcNAc...) asparagine glycosylation is found at Asn-70 and Asn-85. The Peptidase A1 domain occupies 73–438; the sequence is LTVTLTVGTP…DLQRSRIGLA (366 aa). Residue Asp-91 is part of the active site. 4 N-linked (GlcNAc...) asparagine glycosylation sites follow: Asn-102, Asn-175, Asn-178, and Asn-243. Asp-304 is an active-site residue. 2 N-linked (GlcNAc...) asparagine glycosylation sites follow: Asn-326 and Asn-395.

This sequence belongs to the peptidase A1 family. Expressed specifically in developing gametophytes and developing seeds.

The protein resides in the endoplasmic reticulum. Functionally, embryo-specific aspartic protease that limits programmed cell death during reproductive development. Possesses peptidase activity toward casein in vitro. The sequence is that of Aspartic proteinase PCS1 (PCS1) from Arabidopsis thaliana (Mouse-ear cress).